A 147-amino-acid polypeptide reads, in one-letter code: CRISP-1 (147 aa).

The protein belongs to the CRISP family. In terms of tissue distribution, expressed by the venom gland.

It is found in the secreted. The polypeptide is CRISP-1 (Phoneutria keyserlingi (Brazilian wandering spider)).